A 439-amino-acid polypeptide reads, in one-letter code: Packaging protein 1 (439 aa).

Polar residues predominate over residues 1–23; it reads MSTQIPARQETYDPSQSSGTKTP. The tract at residues 1–42 is disordered; the sequence is MSTQIPARQETYDPSQSSGTKTPSHPYDGNPTRSYPKRNAGK. ATP is bound at residue 151–158; that stretch reads GPTGSGKS. The interval 419 to 439 is DNA-binding; it reads ERNPKLTDLEKLSPPGTFQET.

Belongs to the adenoviridae packaging protein 1 family. Homodimer. Part of a genome packaging complex composed of packaging proteins 1, 2 and 3; this complex specifically binds to the packaging sequence on the left end of viral genomic DNA and performs packaging of the viral genome. Interacts with protein 33K.

Its subcellular location is the virion. It localises to the host nucleus. It is found in the host nucleoplasm. The protein resides in the host nucleolus. Functionally, component of the packaging machinery which encapsidates the viral DNA into preformed capsids and transcriptional activator of the viral major late promoter (MLP). Binds, along with packaging proteins 2 and 3, to the specific packaging sequence on the left end of viral genomic DNA and displays ATPase activity thereby providing the power stroke of the packaging machinery. The activity of packaging protein IVa2 is stimulated by protein 33K which acts as a terminase. May be the protein that pumps DNA into the capsid powered by ATP hydrolysis. Specifically binds to the 5'-CG-3' nucleotides of the repeats making up the packaging sequence. Component of the DEF-A and DEF-B transcription factors that bind downstream elements of the major late promoter (MLP), and stimulate transcription from the MLP after initiation of viral DNA replication. DEF-A is a heterodimer packaging proteins 1 and 2 and DEF-B is a homodimer of packaging protein 1. The polypeptide is Packaging protein 1 (Fowl adenovirus A serotype 1 (strain CELO / Phelps) (FAdV-1)).